Consider the following 217-residue polypeptide: 3,4-dihydroxy-2-butanone 4-phosphate synthase (217 aa).

D-ribulose 5-phosphate contacts are provided by residues 37-38 (RE), Asp-42, 150-154 (RQGHT), and Glu-174. Glu-38 contributes to the Mg(2+) binding site. Residue His-153 participates in Mg(2+) binding.

The protein belongs to the DHBP synthase family. Homodimer. Mg(2+) serves as cofactor. It depends on Mn(2+) as a cofactor.

The enzyme catalyses D-ribulose 5-phosphate = (2S)-2-hydroxy-3-oxobutyl phosphate + formate + H(+). The protein operates within cofactor biosynthesis; riboflavin biosynthesis; 2-hydroxy-3-oxobutyl phosphate from D-ribulose 5-phosphate: step 1/1. In terms of biological role, catalyzes the conversion of D-ribulose 5-phosphate to formate and 3,4-dihydroxy-2-butanone 4-phosphate. The sequence is that of 3,4-dihydroxy-2-butanone 4-phosphate synthase from Desulforamulus reducens (strain ATCC BAA-1160 / DSM 100696 / MI-1) (Desulfotomaculum reducens).